The following is a 332-amino-acid chain: Glycerol-3-phosphate dehydrogenase [NAD(P)+] (332 aa).

Residues serine 15, tryptophan 16, and lysine 110 each coordinate NADPH. Positions 110, 137, and 139 each coordinate sn-glycerol 3-phosphate. NADPH is bound at residue alanine 141. Residues lysine 192, aspartate 245, serine 255, arginine 256, and asparagine 257 each contribute to the sn-glycerol 3-phosphate site. Catalysis depends on lysine 192, which acts as the Proton acceptor. Arginine 256 serves as a coordination point for NADPH. Position 282 (glutamate 282) interacts with NADPH.

This sequence belongs to the NAD-dependent glycerol-3-phosphate dehydrogenase family.

It is found in the cytoplasm. It catalyses the reaction sn-glycerol 3-phosphate + NAD(+) = dihydroxyacetone phosphate + NADH + H(+). The enzyme catalyses sn-glycerol 3-phosphate + NADP(+) = dihydroxyacetone phosphate + NADPH + H(+). It participates in membrane lipid metabolism; glycerophospholipid metabolism. Catalyzes the reduction of the glycolytic intermediate dihydroxyacetone phosphate (DHAP) to sn-glycerol 3-phosphate (G3P), the key precursor for phospholipid synthesis. This chain is Glycerol-3-phosphate dehydrogenase [NAD(P)+], found in Coxiella burnetii (strain CbuG_Q212) (Coxiella burnetii (strain Q212)).